The sequence spans 72 residues: Large ribosomal subunit protein bL31 (72 aa).

The Zn(2+) site is built by cysteine 16, cysteine 18, cysteine 38, and cysteine 41.

It belongs to the bacterial ribosomal protein bL31 family. Type A subfamily. Part of the 50S ribosomal subunit. Requires Zn(2+) as cofactor.

Binds the 23S rRNA. The polypeptide is Large ribosomal subunit protein bL31 (Azoarcus sp. (strain BH72)).